Reading from the N-terminus, the 375-residue chain is Peptide chain release factor 1 (375 aa).

Q237 is modified (N5-methylglutamine). Residues A289 to R299 show a composition bias toward basic and acidic residues. Residues A289–R326 are disordered.

Belongs to the prokaryotic/mitochondrial release factor family. Post-translationally, methylated by PrmC. Methylation increases the termination efficiency of RF1.

It is found in the cytoplasm. In terms of biological role, peptide chain release factor 1 directs the termination of translation in response to the peptide chain termination codons UAG and UAA. The chain is Peptide chain release factor 1 (prfA) from Deinococcus radiodurans (strain ATCC 13939 / DSM 20539 / JCM 16871 / CCUG 27074 / LMG 4051 / NBRC 15346 / NCIMB 9279 / VKM B-1422 / R1).